We begin with the raw amino-acid sequence, 562 residues long: Bacillolysin (562 aa).

An N-terminal signal peptide occupies residues 1-24 (MKKKKQALKVLLSVGILSSSFAFA). A propeptide spans 25–245 (HTSSAAPNNV…KQAAKPAAKP (221 aa)) (activation peptide). Ca(2+) is bound by residues Asp-303, Asp-305, and Asp-384. A Zn(2+)-binding site is contributed by His-388. Glu-389 is an active-site residue. Zn(2+) is bound by residues His-392 and Glu-412. Residues Glu-423, Asn-429, Asp-431, Glu-433, Glu-436, Tyr-439, Thr-440, and Asp-446 each coordinate Ca(2+). The active-site Proton donor is His-477.

This sequence belongs to the peptidase M4 family. Ca(2+) serves as cofactor. Zn(2+) is required as a cofactor.

The protein localises to the secreted. It carries out the reaction Similar, but not identical, to that of thermolysin.. Extracellular zinc metalloprotease. In Priestia megaterium (strain DSM 319 / IMG 1521) (Bacillus megaterium), this protein is Bacillolysin (nprM).